Reading from the N-terminus, the 179-residue chain is tRNA (cytidine(56)-2'-O)-methyltransferase (179 aa).

Residues Leu-82, 112-116 (GAEKV), and 130-137 (VGNQPHSE) each bind S-adenosyl-L-methionine.

This sequence belongs to the aTrm56 family. Homodimer.

It localises to the cytoplasm. The catalysed reaction is cytidine(56) in tRNA + S-adenosyl-L-methionine = 2'-O-methylcytidine(56) in tRNA + S-adenosyl-L-homocysteine + H(+). In terms of biological role, specifically catalyzes the AdoMet-dependent 2'-O-ribose methylation of cytidine at position 56 in tRNAs. This chain is tRNA (cytidine(56)-2'-O)-methyltransferase, found in Methanococcus maripaludis (strain DSM 14266 / JCM 13030 / NBRC 101832 / S2 / LL).